A 357-amino-acid polypeptide reads, in one-letter code: Sorbitol dehydrogenase (357 aa).

Ala-2 carries the post-translational modification N-acetylalanine. Residue Cys-45 coordinates Zn(2+). Tyr-51 is a binding site for substrate. His-70 and Glu-71 together coordinate Zn(2+). Substrate is bound at residue Glu-156. NAD(+)-binding residues include Ile-184, Asp-204, and Arg-209. Phosphoserine occurs at positions 211 and 225. Residues 273 to 275 and 297 to 299 each bind NAD(+); these read VGL and VFR. Residues Arg-299 and Tyr-300 each coordinate substrate.

Belongs to the zinc-containing alcohol dehydrogenase family. Homotetramer. Zn(2+) is required as a cofactor.

Its subcellular location is the mitochondrion membrane. The protein localises to the cell projection. The protein resides in the cilium. It localises to the flagellum. It catalyses the reaction xylitol + NAD(+) = D-xylulose + NADH + H(+). The catalysed reaction is L-iditol + NAD(+) = keto-L-sorbose + NADH + H(+). It carries out the reaction keto-D-fructose + NADH + H(+) = D-sorbitol + NAD(+). Polyol dehydrogenase that catalyzes the reversible NAD(+)-dependent oxidation of various sugar alcohols. Is active with xylitol, L-iditol and D-sorbitol (D-glucitol) as substrates, leading to the C2-oxidized products D-xylulose, L-sorbose and D-fructose, respectively. Is a key enzyme in the polyol pathway that interconverts glucose and fructose via sorbitol, which constitutes an important alternate route for glucose metabolism. May play a role in sperm motility by using sorbitol as an alternative energy source for sperm motility. This Macaca fascicularis (Crab-eating macaque) protein is Sorbitol dehydrogenase (SORD).